The chain runs to 130 residues: Tripartite terminase subunit 2 (130 aa).

This sequence belongs to the herpesviridae TRM2 protein family. Associates with TRM1 and TRM3 to form the tripartite terminase complex.

The protein resides in the host nucleus. Its function is as follows. Component of the molecular motor that translocates viral genomic DNA in empty capsid during DNA packaging. Forms a tripartite terminase complex together with TRM1 and TRM3 in the host cytoplasm. Once the complex reaches the host nucleus, it interacts with the capsid portal vertex. This portal forms a ring in which genomic DNA is translocated into the capsid. This is Tripartite terminase subunit 2 from Homo sapiens (Human).